Here is a 91-residue protein sequence, read N- to C-terminus: ATP synthase subunit c (91 aa).

A run of 2 helical transmembrane segments spans residues 4–24 (FTMC…GTGI) and 53–73 (IGLA…LIIL).

Belongs to the ATPase C chain family. In terms of assembly, F-type ATPases have 2 components, F(1) - the catalytic core - and F(0) - the membrane proton channel. F(1) has five subunits: alpha(3), beta(3), gamma(1), delta(1), epsilon(1). F(0) has three main subunits: a(1), b(2) and c(10-14). The alpha and beta chains form an alternating ring which encloses part of the gamma chain. F(1) is attached to F(0) by a central stalk formed by the gamma and epsilon chains, while a peripheral stalk is formed by the delta and b chains.

It localises to the cell inner membrane. Its function is as follows. F(1)F(0) ATP synthase produces ATP from ADP in the presence of a proton or sodium gradient. F-type ATPases consist of two structural domains, F(1) containing the extramembraneous catalytic core and F(0) containing the membrane proton channel, linked together by a central stalk and a peripheral stalk. During catalysis, ATP synthesis in the catalytic domain of F(1) is coupled via a rotary mechanism of the central stalk subunits to proton translocation. Key component of the F(0) channel; it plays a direct role in translocation across the membrane. A homomeric c-ring of between 10-14 subunits forms the central stalk rotor element with the F(1) delta and epsilon subunits. The chain is ATP synthase subunit c from Citrifermentans bemidjiense (strain ATCC BAA-1014 / DSM 16622 / JCM 12645 / Bem) (Geobacter bemidjiensis).